The chain runs to 283 residues: Ubiquinone biosynthesis protein COQ4, mitochondrial (283 aa).

Residues 1–25 constitute a mitochondrion transit peptide; that stretch reads MAIAKSVRARAVGLRSLRVLCAQRS. Zn(2+) is bound by residues H166, D167, H170, and E182.

It belongs to the COQ4 family. Component of a multi-subunit COQ enzyme complex, composed of at least COQ3, COQ4, COQ5, COQ6, COQ7 and COQ9. The cofactor is Zn(2+).

The protein resides in the mitochondrion inner membrane. It catalyses the reaction a 4-hydroxy-3-methoxy-5-(all-trans-polyprenyl)benzoate + H(+) = a 2-methoxy-6-(all-trans-polyprenyl)phenol + CO2. Its pathway is cofactor biosynthesis; ubiquinone biosynthesis. Functionally, lyase that catalyzes the C1-decarboxylation of 4-hydroxy-3-methoxy-5-(all-trans-polyprenyl)benzoic acid into 2-methoxy-6-(all-trans-polyprenyl)phenol during ubiquinone biosynthesis. This is Ubiquinone biosynthesis protein COQ4, mitochondrial from Coccidioides immitis (strain RS) (Valley fever fungus).